A 307-amino-acid chain; its full sequence is Heme A synthase (307 aa).

Residues 1-6 lie on the Cytoplasmic side of the membrane; that stretch reads MKFALR. The helical transmembrane segment at 7–27 threads the bilayer; it reads LLSVITTFVMLIVLIGGALVT. Over 28–65 the chain is Extracellular; it reads KTGSGLGCGRQWPLCHGRFFPEMNPASIIEWSHRMSTG. C35 and C42 are disulfide-bonded. Residue E57 is part of the active site. H60 contributes to the heme o binding site. Residues 66–86 traverse the membrane as a helical segment; sequence VSTILVLALAVLCWKKISPVF. Topologically, residues 87 to 92 are cytoplasmic; that stretch reads RETKFL. A helical transmembrane segment spans residues 93 to 113; it reads VIMSIIFLLLQALLGALAVVF. The Extracellular segment spans residues 114 to 121; that stretch reads GSNALVMA. Residues 122–142 traverse the membrane as a helical segment; sequence LHFGISLISFASVLLLALLVF. Residue H123 coordinates heme o. Residues 143–161 are Cytoplasmic-facing; it reads EATRSETKLVKPLHIGKKM. A helical transmembrane segment spans residues 162–182; that stretch reads QFHIYGLITYTYIVVYTGAYV. Topologically, residues 183–216 are extracellular; it reads RHTKSSLACSVFPFCSKDGALPAYFNQWVQMSHR. A disulfide bond links C191 and C197. H215 is a binding site for heme b. A helical membrane pass occupies residues 217–237; the sequence is AAALLLFVWIFVAMFHAMKHY. Over 238 to 242 the chain is Cytoplasmic; the sequence is KEQKQ. The chain crosses the membrane as a helical span at residues 243–263; it reads LYYGWIISAILITLQAISGVM. The Extracellular segment spans residues 264–274; it reads SVYSQLALGYA. The helical transmembrane segment at 275 to 295 threads the bilayer; the sequence is LAHSFFISCLFGVLCYFCLLI. Position 277 (H277) interacts with heme b. At 296-307 the chain is on the cytoplasmic side; the sequence is ARFKYESKEPFK.

The protein belongs to the COX15/CtaA family. Type 1 subfamily. As to quaternary structure, interacts with CtaB. It depends on heme b as a cofactor.

It localises to the cell membrane. It carries out the reaction Fe(II)-heme o + 2 A + H2O = Fe(II)-heme a + 2 AH2. It participates in porphyrin-containing compound metabolism; heme A biosynthesis; heme A from heme O: step 1/1. Functionally, catalyzes the conversion of heme O to heme A by two successive hydroxylations of the methyl group at C8. The first hydroxylation forms heme I, the second hydroxylation results in an unstable dihydroxymethyl group, which spontaneously dehydrates, resulting in the formyl group of heme A. In Bacillus pumilus (strain SAFR-032), this protein is Heme A synthase.